The sequence spans 66 residues: UPF0434 protein Nwi_0075 (66 aa).

Belongs to the UPF0434 family.

This Nitrobacter winogradskyi (strain ATCC 25391 / DSM 10237 / CIP 104748 / NCIMB 11846 / Nb-255) protein is UPF0434 protein Nwi_0075.